A 249-amino-acid polypeptide reads, in one-letter code: Probable transcriptional regulatory protein Dtur_1615 (249 aa).

The protein belongs to the TACO1 family.

It localises to the cytoplasm. The protein is Probable transcriptional regulatory protein Dtur_1615 of Dictyoglomus turgidum (strain DSM 6724 / Z-1310).